We begin with the raw amino-acid sequence, 150 residues long: MSLNQKKKACIFPGTFEVFHDGHLNILKRALKLFDFVYIVVAINNTKTSSDLEKRYQKVEEKIDSLSIKNVEVIKWDSKISDFAKIKTIYFIIRGIRDVNDFKFEKYIADIYKQEWDKLEVVYFFSEKKLENISSRKIINLNKGKNDYEN.

Thr15 is a binding site for substrate. ATP is bound by residues 15 to 16 (TF) and His23. Substrate is bound by residues Ile80 and Arg94. Residues 95 to 97 (GIR), Glu105, and 130 to 136 (LENISSR) contribute to the ATP site.

It belongs to the bacterial CoaD family. As to quaternary structure, homohexamer. Requires Mg(2+) as cofactor.

It is found in the cytoplasm. It catalyses the reaction (R)-4'-phosphopantetheine + ATP + H(+) = 3'-dephospho-CoA + diphosphate. It participates in cofactor biosynthesis; coenzyme A biosynthesis; CoA from (R)-pantothenate: step 4/5. Reversibly transfers an adenylyl group from ATP to 4'-phosphopantetheine, yielding dephospho-CoA (dPCoA) and pyrophosphate. The chain is Phosphopantetheine adenylyltransferase from Malacoplasma penetrans (strain HF-2) (Mycoplasma penetrans).